The following is a 138-amino-acid chain: Trypsin inhibitor DE5 alpha chain (138 aa).

An intrachain disulfide couples Cys-40 to Cys-86.

It belongs to the protease inhibitor I3 (leguminous Kunitz-type inhibitor) family. In terms of assembly, heterodimer of an alpha and a beta chain linked by a disulfide bond.

Functionally, inhibition of trypsin. The polypeptide is Trypsin inhibitor DE5 alpha chain (Adenanthera pavonina (Sandal bead tree)).